The primary structure comprises 666 residues: Kinesin-like protein Nod (666 aa).

Residues 8–320 (AVRIAVREAP…LRFGTSAKKL (313 aa)) form the Kinesin motor domain. 87-94 (GQTGTGKS) provides a ligand contact to ATP. Positions 423–450 (GFHSDSDKDRHLMPPPTGQEPRQASSQN) are disordered. Positions 639-666 (ENLFQVKSLPIWSGNKWERFCQINCLDT) form a coiled coil.

It belongs to the TRAFAC class myosin-kinesin ATPase superfamily. Kinesin family. As to expression, in adult female, found in meiotically active ovaries.

The protein localises to the cytoplasm. The protein resides in the cytoskeleton. In terms of biological role, required for the distributive chromosome segregation of non-exchange chromosomes during meiosis. May be a microtubule motor required to hold distributively 'paired' chromosomes at the metaphase plate until anaphase. This is Kinesin-like protein Nod (nod) from Drosophila melanogaster (Fruit fly).